Consider the following 79-residue polypeptide: Acyl carrier protein (79 aa).

One can recognise a Carrier domain in the interval 2-77 (SEVAEKVKKI…DAIDYIEKKK (76 aa)). O-(pantetheine 4'-phosphoryl)serine is present on serine 37.

This sequence belongs to the acyl carrier protein (ACP) family. 4'-phosphopantetheine is transferred from CoA to a specific serine of apo-ACP by AcpS. This modification is essential for activity because fatty acids are bound in thioester linkage to the sulfhydryl of the prosthetic group.

The protein localises to the cytoplasm. It participates in lipid metabolism; fatty acid biosynthesis. Functionally, carrier of the growing fatty acid chain in fatty acid biosynthesis. The sequence is that of Acyl carrier protein from Acidiphilium cryptum (strain JF-5).